The chain runs to 581 residues: Probable peptidoglycan D,D-transpeptidase PenA (581 aa).

The chain crosses the membrane as a helical span at residues 28 to 48 (ISFVLMAIAVLFAGLIARGLY). Serine 310 (acyl-ester intermediate) is an active-site residue.

This sequence belongs to the transpeptidase family. FtsI subfamily.

The protein resides in the cell inner membrane. It catalyses the reaction Preferential cleavage: (Ac)2-L-Lys-D-Ala-|-D-Ala. Also transpeptidation of peptidyl-alanyl moieties that are N-acyl substituents of D-alanine.. It participates in cell wall biogenesis; peptidoglycan biosynthesis. In terms of biological role, catalyzes cross-linking of the peptidoglycan cell wall at the division septum. The protein is Probable peptidoglycan D,D-transpeptidase PenA of Neisseria meningitidis serogroup A / serotype 4A (strain DSM 15465 / Z2491).